A 1122-amino-acid chain; its full sequence is Histone deacetylase 5 (1122 aa).

A disordered region spans residues 1–24 (MNSPNESDGMSGREPSLEILPRTS). A Glycyl lysine isopeptide (Lys-Gly) (interchain with G-Cter in SUMO2) cross-link involves residue K35. Disordered regions lie at residues 41-60 (AMPSSMGGGGGGSPSPVELR) and 196-281 (KEPT…SSPL). Over residues 247–258 (DSRDDFPLRKTA) the composition is skewed to basic and acidic residues. S259 is subject to Phosphoserine; by AMPK, CaMK1, SIK1 and PKD/PRKD1. Over residues 272–281 (KVAERRSSPL) the composition is skewed to basic and acidic residues. T292 bears the Phosphothreonine; by PKC mark. 2 disordered regions span residues 302–343 (GAGP…NIPT) and 481–504 (MRTVGKLPRHRPLSRTQSSPLPQS). Low complexity predominate over residues 312 to 327 (NSAPGSGPSSPNSSHS). The segment covering 328 to 340 (TIAENGFTGSVPN) has biased composition (polar residues). Residues 494–504 (SRTQSSPLPQS) are compositionally biased toward low complexity. At S498 the chain carries Phosphoserine; by AMPK, CaMK1, SIK1 and PKD/PRKD1. The residue at position 533 (K533) is an N6-acetyllysine. Residues 536 to 625 (TKTGELPRQP…GPDLEEPGAG (90 aa)) are disordered. Residues 581–621 (STQEDLEEEDEEDDGEEEEDCIQVKDEEGESGAEEGPDLEE) show a composition bias toward acidic residues. S611 and S661 each carry phosphoserine. The interval 684-1028 (GVVYDTFMLK…VSALLSVELQ (345 aa)) is histone deacetylase. Zn(2+)-binding residues include C696, C698, H704, and C781. H833 is a catalytic residue. The short motif at 1081–1122 (EEAETVSAMALLSVGAEQAQAAAAREHSPRPAEEPMEQEPAL) is the Nuclear export signal element. Residues 1097–1122 (EQAQAAAAREHSPRPAEEPMEQEPAL) are disordered. Positions 1104 to 1113 (AREHSPRPAE) are enriched in basic and acidic residues. S1108 is subject to Phosphoserine.

The protein belongs to the histone deacetylase family. HD type 2 subfamily. In terms of assembly, interacts with AHRR, BAHD1, BCOR, HDAC7, HDAC9, CTBP1, MEF2C, NCOR2, NRIP1, PHB2 and a 14-3-3 chaperone protein. Interacts with BCL6, DDIT3/CHOP, GRK5, KDM5B and MYOCD. Interacts with EP300 in the presence of TFAP2C. Interacts with ANKRA2. Interacts with CUL7 (as part of the 3M complex); negatively regulated by ANKRA2. Interacts with ZBTB7B; the interaction allows the recruitment of HDAC4 on CD8 loci for deacetylation and possible inhibition of CD8 genes expression. Interacts with RARA. In terms of processing, phosphorylated by AMPK, CaMK1, SIK1 and PRKD1 at Ser-259 and Ser-498. The phosphorylation is required for the export to the cytoplasm and inhibition. Phosphorylated by the PKC kinases PKN1 and PKN2, impairing nuclear import. Phosphorylated by GRK5, leading to nuclear export of HDAC5 and allowing MEF2-mediated transcription. Post-translationally, ubiquitinated. Polyubiquitination however does not lead to its degradation. As to expression, ubiquitous.

It localises to the nucleus. The protein resides in the cytoplasm. The catalysed reaction is N(6)-acetyl-L-lysyl-[histone] + H2O = L-lysyl-[histone] + acetate. In terms of biological role, responsible for the deacetylation of lysine residues on the N-terminal part of the core histones (H2A, H2B, H3 and H4). Histone deacetylation gives a tag for epigenetic repression and plays an important role in transcriptional regulation, cell cycle progression and developmental events. Histone deacetylases act via the formation of large multiprotein complexes. Involved in muscle maturation by repressing transcription of myocyte enhancer MEF2C. During muscle differentiation, it shuttles into the cytoplasm, allowing the expression of myocyte enhancer factors. Involved in the MTA1-mediated epigenetic regulation of ESR1 expression in breast cancer. Serves as a corepressor of RARA and causes its deacetylation. In association with RARA, plays a role in the repression of microRNA-10a and thereby in the inflammatory response. The chain is Histone deacetylase 5 (HDAC5) from Homo sapiens (Human).